Here is a 360-residue protein sequence, read N- to C-terminus: Casein kinase II subunit alpha (360 aa).

Residues 38–323 (YQLVRKLGRG…AQEAMGHEYF (286 aa)) enclose the Protein kinase domain. Residues 44-52 (LGRGKYSEV) and Lys67 each bind ATP. Asp155 acts as the Proton acceptor in catalysis. The tract at residues 334–360 (NGTEQADGQGASNSASSQSSDAKIDGA) is disordered. Residues 338 to 354 (QADGQGASNSASSQSSD) show a composition bias toward low complexity.

It belongs to the protein kinase superfamily. Ser/Thr protein kinase family. CK2 subfamily. Tetramer of two alpha and two beta chains. As to expression, expressed in a subset of the adult male sensory neurons: CEM head neurons, ray RnB neurons, and hook HOB tail neurons.

It is found in the cell projection. The protein localises to the axon. It localises to the cilium. The protein resides in the dendrite. Its subcellular location is the perikaryon. It carries out the reaction L-seryl-[protein] + ATP = O-phospho-L-seryl-[protein] + ADP + H(+). The enzyme catalyses L-threonyl-[protein] + ATP = O-phospho-L-threonyl-[protein] + ADP + H(+). In terms of biological role, casein kinases are operationally defined by their preferential utilization of acidic proteins such as caseins as substrates. The alpha chain contains the catalytic site. May participate in Wnt signaling. Modulates two aspects of male mating behavior; response to hermaphrodite contact and vulval location, acting in the same pathway as lov-1 and pkd-2. The chain is Casein kinase II subunit alpha (kin-3) from Caenorhabditis elegans.